The chain runs to 473 residues: Zinc finger and BTB domain-containing protein 9 (473 aa).

The region spanning 48-112 is the BTB domain; the sequence is CDVSLLVQGR…IYSGRLRLPL (65 aa). A disordered region spans residues 177–279; the sequence is QTPVQSSAST…LELPAPPALP (103 aa). Residues 182 to 196 are compositionally biased toward low complexity; sequence SSASTESPASTESPV. Residues 211–226 are compositionally biased toward acidic residues; sequence VEEEEEEEEDDDDEDQ. A compositionally biased stretch (polar residues) spans 227-239; the sequence is GSATLSQTPQPQR. A Glycyl lysine isopeptide (Lys-Gly) (interchain with G-Cter in SUMO1); alternate cross-link involves residue K286. K286 is covalently cross-linked (Glycyl lysine isopeptide (Lys-Gly) (interchain with G-Cter in SUMO2); alternate). Residues K293 and K307 each participate in a glycyl lysine isopeptide (Lys-Gly) (interchain with G-Cter in SUMO2) cross-link. The disordered stretch occupies residues 293–376; it reads KEEISGSGTQ…VHGPVKLGGT (84 aa). Positions 355-364 are enriched in gly residues; the sequence is SGGGGPGGAG. K382 is covalently cross-linked (Glycyl lysine isopeptide (Lys-Gly) (interchain with G-Cter in SUMO2)). The segment at 411–433 adopts a C2H2-type 1 zinc-finger fold; sequence FGCGICNKRFKLKHHLTEHMKTH. The segment at 438–460 adopts a C2H2-type 2; atypical zinc-finger fold; the sequence is HACPHCGRRFRVHACFLRHRDLC.

The protein resides in the nucleus. May be involved in transcriptional regulation. The polypeptide is Zinc finger and BTB domain-containing protein 9 (ZBTB9) (Homo sapiens (Human)).